The chain runs to 282 residues: Elongation factor Ts (282 aa).

An involved in Mg(2+) ion dislocation from EF-Tu region spans residues 81–84; that stretch reads TDFV. Positions 218–270 are enriched in low complexity; that stretch reads KPAQPAQVAEVAAAPPAEPVADQPAAEPPAESVAPEPVVAESADAEPAPAAEG. Residues 218–282 form a disordered region; sequence KPAQPAQVAE…SKKGSTKKKK (65 aa). The span at 273-282 shows a compositional bias: basic residues; sequence SKKGSTKKKK.

The protein belongs to the EF-Ts family.

It localises to the cytoplasm. Its function is as follows. Associates with the EF-Tu.GDP complex and induces the exchange of GDP to GTP. It remains bound to the aminoacyl-tRNA.EF-Tu.GTP complex up to the GTP hydrolysis stage on the ribosome. The polypeptide is Elongation factor Ts (Synechococcus sp. (strain JA-3-3Ab) (Cyanobacteria bacterium Yellowstone A-Prime)).